A 328-amino-acid polypeptide reads, in one-letter code: Malate dehydrogenase (328 aa).

NAD(+) is bound at residue 11–17 (GAAGQIG). Residues arginine 94 and arginine 100 each coordinate substrate. Residues asparagine 107, glutamine 114, and 131-133 (VGN) contribute to the NAD(+) site. Residues asparagine 133 and arginine 164 each contribute to the substrate site. Catalysis depends on histidine 189, which acts as the Proton acceptor.

It belongs to the LDH/MDH superfamily. MDH type 2 family.

It carries out the reaction (S)-malate + NAD(+) = oxaloacetate + NADH + H(+). Its function is as follows. Catalyzes the reversible oxidation of malate to oxaloacetate. The sequence is that of Malate dehydrogenase from Acinetobacter baylyi (strain ATCC 33305 / BD413 / ADP1).